The sequence spans 226 residues: Guanylate kinase (226 aa).

In terms of domain architecture, Guanylate kinase-like spans 13 to 193; it reads GLLLVLSAPS…ALAQLQAIVR (181 aa). 20 to 27 serves as a coordination point for ATP; the sequence is APSGAGKT.

This sequence belongs to the guanylate kinase family.

The protein resides in the cytoplasm. It catalyses the reaction GMP + ATP = GDP + ADP. Its function is as follows. Essential for recycling GMP and indirectly, cGMP. The chain is Guanylate kinase from Anaeromyxobacter dehalogenans (strain 2CP-C).